A 323-amino-acid chain; its full sequence is Mycothiol acetyltransferase (323 aa).

1D-myo-inositol 2-(L-cysteinylamino)-2-deoxy-alpha-D-glucopyranoside is bound at residue Glu-44. 98–100 is a binding site for acetyl-CoA; sequence LAV. The N-acetyltransferase domain occupies 173-323; the sequence is VSLRAFIPGQ…DVMYGPKNGG (151 aa). Residues Glu-200, Lys-240, and Glu-253 each contribute to the 1D-myo-inositol 2-(L-cysteinylamino)-2-deoxy-alpha-D-glucopyranoside site. Acetyl-CoA contacts are provided by residues 257–259 and 264–270; these read VGV and QGMGLGK. Tyr-291 provides a ligand contact to 1D-myo-inositol 2-(L-cysteinylamino)-2-deoxy-alpha-D-glucopyranoside.

The protein belongs to the acetyltransferase family. MshD subfamily. In terms of assembly, monomer.

The catalysed reaction is 1D-myo-inositol 2-(L-cysteinylamino)-2-deoxy-alpha-D-glucopyranoside + acetyl-CoA = mycothiol + CoA + H(+). Functionally, catalyzes the transfer of acetyl from acetyl-CoA to desacetylmycothiol (Cys-GlcN-Ins) to form mycothiol. The protein is Mycothiol acetyltransferase of Arthrobacter sp. (strain FB24).